The following is a 647-amino-acid chain: Nucleolar GTP-binding protein 1 (647 aa).

The region spanning 168-340 (RTLLICGYPN…VRNKACEKLL (173 aa)) is the OBG-type G domain. GTP contacts are provided by residues 174–181 (GYPNVGKS), 220–224 (DTPGI), and 288–291 (NKTD). The residue at position 563 (Ser563) is a Phosphoserine. Residues 594-647 (ADGSMRSKADRMAKMERRERNRHAKQGESDRHNAVSLSKHLFSGKRGVGKTDFR) are disordered. Positions 598-626 (MRSKADRMAKMERRERNRHAKQGESDRHN) are enriched in basic and acidic residues.

Belongs to the TRAFAC class OBG-HflX-like GTPase superfamily. OBG GTPase family. NOG subfamily. In terms of assembly, associated with nucleolar and cytoplasmic pre-60S particles. Directly interacts with RLP24.

The protein resides in the nucleus. It localises to the nucleolus. Its function is as follows. Involved in the biogenesis of the 60S ribosomal subunit. This is Nucleolar GTP-binding protein 1 (NOG1) from Saccharomyces cerevisiae (strain ATCC 204508 / S288c) (Baker's yeast).